A 302-amino-acid chain; its full sequence is Elongation factor Ts (302 aa).

The involved in Mg(2+) ion dislocation from EF-Tu stretch occupies residues 80-83 (TDFV).

Belongs to the EF-Ts family.

Its subcellular location is the cytoplasm. In terms of biological role, associates with the EF-Tu.GDP complex and induces the exchange of GDP to GTP. It remains bound to the aminoacyl-tRNA.EF-Tu.GTP complex up to the GTP hydrolysis stage on the ribosome. This chain is Elongation factor Ts, found in Gluconobacter oxydans (strain 621H) (Gluconobacter suboxydans).